A 104-amino-acid polypeptide reads, in one-letter code: MKSCQKMEGKPENESEPKHEEEPKPEEKPEEEEKLEEEAKAKGTFRERLIQSLQEFKEDIHNRHLSNEDMFREVDEIDEIRRVRNKLIVMRWKVNRNHPYPYLM.

Over residues 1-27 the composition is skewed to basic and acidic residues; it reads MKSCQKMEGKPENESEPKHEEEPKPEE. Residues 1-44 form a disordered region; that stretch reads MKSCQKMEGKPENESEPKHEEEPKPEEKPEEEEKLEEEAKAKGT.

The protein belongs to the TFS-II family. TFA subfamily.

The protein resides in the nucleus. May be involved in transcriptional regulation. This chain is Transcription elongation factor A protein-like 9, found in Homo sapiens (Human).